Here is a 250-residue protein sequence, read N- to C-terminus: Small ribosomal subunit protein uS2 (250 aa).

Belongs to the universal ribosomal protein uS2 family.

This Polaromonas naphthalenivorans (strain CJ2) protein is Small ribosomal subunit protein uS2.